A 465-amino-acid chain; its full sequence is Chromosomal replication initiator protein DnaA (465 aa).

The segment at Met1 to Gly80 is domain I, interacts with DnaA modulators. The interval Gly80–Arg127 is domain II. Residues Leu128–Ala345 are domain III, AAA+ region. ATP contacts are provided by Gly173, Gly175, Lys176, and Thr177. Residues Arg346 to Ser465 form a domain IV, binds dsDNA region.

The protein belongs to the DnaA family. As to quaternary structure, oligomerizes as a right-handed, spiral filament on DNA at oriC.

The protein resides in the cytoplasm. In terms of biological role, plays an essential role in the initiation and regulation of chromosomal replication. ATP-DnaA binds to the origin of replication (oriC) to initiate formation of the DNA replication initiation complex once per cell cycle. Binds the DnaA box (a 9 base pair repeat at the origin) and separates the double-stranded (ds)DNA. Forms a right-handed helical filament on oriC DNA; dsDNA binds to the exterior of the filament while single-stranded (ss)DNA is stabiized in the filament's interior. The ATP-DnaA-oriC complex binds and stabilizes one strand of the AT-rich DNA unwinding element (DUE), permitting loading of DNA polymerase. After initiation quickly degrades to an ADP-DnaA complex that is not apt for DNA replication. Binds acidic phospholipids. In Acinetobacter baylyi (strain ATCC 33305 / BD413 / ADP1), this protein is Chromosomal replication initiator protein DnaA.